The sequence spans 82 residues: uncharacterized protein (82 aa).

3 consecutive transmembrane segments (helical) span residues 1–21 (MSASKILVGCWLGLAVLSVST), 22–42 (VLLGNAGATLALAAGVLLAAF), and 62–82 (WRLLLLGWPLLMAIGVLLTLL).

The protein resides in the cell membrane. This is an uncharacterized protein from Stutzerimonas stutzeri (Pseudomonas stutzeri).